We begin with the raw amino-acid sequence, 892 residues long: Leucine--tRNA ligase (892 aa).

The 'HIGH' region signature appears at 42-52; it reads PYPSGKLHMGH. The 'KMSKS' region motif lies at 640 to 644; that stretch reads TMSKS. ATP is bound at residue K643.

Belongs to the class-I aminoacyl-tRNA synthetase family.

It localises to the cytoplasm. It catalyses the reaction tRNA(Leu) + L-leucine + ATP = L-leucyl-tRNA(Leu) + AMP + diphosphate. The sequence is that of Leucine--tRNA ligase from Albidiferax ferrireducens (strain ATCC BAA-621 / DSM 15236 / T118) (Rhodoferax ferrireducens).